A 490-amino-acid chain; its full sequence is Cytochrome P450 71A19 (490 aa).

A helical membrane pass occupies residues Ile3–Leu23. Cys433 lines the heme pocket.

This sequence belongs to the cytochrome P450 family. It depends on heme as a cofactor.

The protein resides in the membrane. In Arabidopsis thaliana (Mouse-ear cress), this protein is Cytochrome P450 71A19 (CYP71A19).